Consider the following 237-residue polypeptide: GrpE protein homolog, mitochondrial (237 aa).

The protein belongs to the GrpE family. Probable component of the PAM complex at least composed of a mitochondrial HSP70 protein, GrpE, tim-44, tim-16 and tim-14/dnj-21.

It localises to the mitochondrion matrix. Functionally, essential component of the PAM complex, a complex required for the translocation of transit peptide-containing proteins from the inner membrane into the mitochondrial matrix in an ATP-dependent manner. Seems to control the nucleotide-dependent binding of mitochondrial HSP70 to substrate proteins. This chain is GrpE protein homolog, mitochondrial, found in Caenorhabditis elegans.